Here is a 237-residue protein sequence, read N- to C-terminus: Ribosomal RNA small subunit methyltransferase G (237 aa).

S-adenosyl-L-methionine-binding positions include Gly78, Phe83, Ala129–Glu130, and Arg148. The segment at Lys218 to Leu237 is disordered.

The protein belongs to the methyltransferase superfamily. RNA methyltransferase RsmG family.

It is found in the cytoplasm. In terms of biological role, specifically methylates the N7 position of a guanine in 16S rRNA. This is Ribosomal RNA small subunit methyltransferase G from Streptococcus pneumoniae serotype 19F (strain G54).